We begin with the raw amino-acid sequence, 375 residues long: Glutamate 5-kinase (375 aa).

K17 contributes to the ATP binding site. Substrate is bound by residues S57, D144, and N158. 178–179 is an ATP binding site; that stretch reads TD. Residues 284-360 enclose the PUA domain; the sequence is SGSIVVDTGA…NEIADILGYK (77 aa).

It belongs to the glutamate 5-kinase family.

The protein resides in the cytoplasm. The enzyme catalyses L-glutamate + ATP = L-glutamyl 5-phosphate + ADP. The protein operates within amino-acid biosynthesis; L-proline biosynthesis; L-glutamate 5-semialdehyde from L-glutamate: step 1/2. In terms of biological role, catalyzes the transfer of a phosphate group to glutamate to form L-glutamate 5-phosphate. The chain is Glutamate 5-kinase from Methanococcoides burtonii (strain DSM 6242 / NBRC 107633 / OCM 468 / ACE-M).